A 180-amino-acid chain; its full sequence is ATP-dependent protease subunit HslV (180 aa).

T8 is a catalytic residue. Positions 165, 168, and 171 each coordinate Na(+).

This sequence belongs to the peptidase T1B family. HslV subfamily. In terms of assembly, a double ring-shaped homohexamer of HslV is capped on each side by a ring-shaped HslU homohexamer. The assembly of the HslU/HslV complex is dependent on binding of ATP.

The protein resides in the cytoplasm. The enzyme catalyses ATP-dependent cleavage of peptide bonds with broad specificity.. Its activity is regulated as follows. Allosterically activated by HslU binding. Its function is as follows. Protease subunit of a proteasome-like degradation complex believed to be a general protein degrading machinery. This Staphylococcus epidermidis (strain ATCC 12228 / FDA PCI 1200) protein is ATP-dependent protease subunit HslV.